Here is a 351-residue protein sequence, read N- to C-terminus: Circumsporozoite protein (351 aa).

The first 22 residues, 1–22, serve as a signal peptide directing secretion; that stretch reads MKNFILLAVSSILLVDLLPTHF. Residues 50–266 form a disordered region; the sequence is AQVRQSASRG…GQNNQGANVP (217 aa). Residues 61–96 are compositionally biased toward basic and acidic residues; that stretch reads GLGEKPKEGADKEKKKEKEKEKEEEPKKPNENKLKQ. Residues 80–88 form a required for the binding to heparan sulfate proteoglycans (HSPGs) on the surface of host hepatocytes region; sequence KEKEEEPKK. Residues 93–97 are region I; contains the proteolytic cleavage site; the sequence is KLKQP. Positions 97-219 are enriched in low complexity; that stretch reads PEQPAAGAGG…AGARGEQPAA (123 aa). 14 repeat units span residues 101–109, 110–118, 119–127, 128–136, 137–145, 146–154, 155–163, 164–172, 173–181, 182–190, 191–199, 200–208, 209–217, and 218–226. The segment at 101-226 is 14 X 9 AA tandem repeats of A-A-G-A-[GR]-G-E-Q-P; that stretch reads AAGAGGEQPA…PAAGAGGEQP (126 aa). Gly residues predominate over residues 244 to 256; it reads GARGGNAGAGKGQ. Positions 277–329 constitute a TSP type-1 domain; it reads KIRSSVTTEWTPCSVTCGNGVRIRRKGHAGNKKAEDLTMDDLEVEACVMDKCA. 2 disulfide bridges follow: cysteine 289–cysteine 323 and cysteine 293–cysteine 328. The O-linked (Fuc) threonine glycan is linked to threonine 292. Cysteine 328 is lipidated: GPI-anchor amidated cysteine. A propeptide spans 329-351 (removed in mature form); the sequence is AGIFNVVSNSLGLVILLVLALFN.

It belongs to the plasmodium circumsporozoite protein family. During host cell invasion, proteolytically cleaved at the cell membrane in the region I by a papain-like cysteine protease of parasite origin. Cleavage is triggered by the sporozoite contact with highly sulfated heparan sulfate proteoglycans (HSPGs) present on the host hepatocyte cell surface. Cleavage exposes the TSP type-1 (TSR) domain and is required for productive invasion of host hepatocytes but not for adhesion to the host cell membrane. Cleavage is dispensable for sporozoite development in the oocyst, motility and for traversal of host and vector cells. Post-translationally, O-glycosylated; maybe by POFUT2.

It is found in the cell membrane. The protein resides in the cytoplasm. Its function is as follows. Essential sporozoite protein. In the mosquito vector, required for sporozoite development in the oocyst, migration through the vector hemolymph and entry into the vector salivary glands. In the vertebrate host, required for sporozoite migration through the host dermis and infection of host hepatocytes. Binds to highly sulfated heparan sulfate proteoglycans (HSPGs) on the surface of host hepatocytes. In terms of biological role, in the vertebrate host, binds to highly sulfated heparan sulfate proteoglycans (HSPGs) on the surface of host hepatocytes and is required for sporozoite invasion of the host hepatocytes. In Plasmodium knowlesi (strain nuri), this protein is Circumsporozoite protein.